A 137-amino-acid chain; its full sequence is ATP synthase epsilon chain, chloroplastic (137 aa).

It belongs to the ATPase epsilon chain family. F-type ATPases have 2 components, CF(1) - the catalytic core - and CF(0) - the membrane proton channel. CF(1) has five subunits: alpha(3), beta(3), gamma(1), delta(1), epsilon(1). CF(0) has three main subunits: a, b and c.

The protein localises to the plastid. It is found in the chloroplast thylakoid membrane. In terms of biological role, produces ATP from ADP in the presence of a proton gradient across the membrane. This Medicago sativa (Alfalfa) protein is ATP synthase epsilon chain, chloroplastic.